We begin with the raw amino-acid sequence, 1433 residues long: Probable ATP-dependent RNA helicase spindle-E (1433 aa).

Residues 76–98 are disordered; that stretch reads NRTLDELDSDDEEENMQEQPSVR. Acidic residues predominate over residues 81 to 91; it reads ELDSDDEEENM. A Helicase ATP-binding domain is found at 127 to 294; that stretch reads MKAIRENPVV…FATSSAFPPV (168 aa). An ATP-binding site is contributed by 140 to 147; sequence GETGCGKT. Positions 240-243 match the DEAH box motif; that stretch reads DEVH. One can recognise a Helicase C-terminal domain in the interval 354 to 526; the sequence is QSLQSYEEAK…NSVLKAKELE (173 aa). In terms of domain architecture, Tudor spans 937–1000; sequence ASAVTKGLQL…RLMPHELKRD (64 aa).

The protein belongs to the DEAD box helicase family. DEAH subfamily.

Its subcellular location is the cytoplasm. It catalyses the reaction ATP + H2O = ADP + phosphate + H(+). In terms of biological role, probable ATP-binding RNA helicase which plays a central role during spermatogenesis and oogenesis by repressing transposable elements and preventing their mobilization, which is essential for the germline integrity. Acts via the piRNA metabolic process, which mediates the repression of transposable elements during meiosis by forming complexes composed of piRNAs and Piwi and govern the methylation and subsequent repression of transposons. Involved in the repression of LTR retrotransposon copia. Also involved in telomere regulation by repressing specialized telomeric retroelements HeT-A, TAHRE, and TART; Drosophila telomeres being maintained by transposition of specialized telomeric retroelements. Involved in telomeric trans-silencing, a repression mechanism by which a transposon or a transgene inserted in subtelomeric heterochromatin has the capacity to repress in trans in the female germline, a homologous transposon, or transgene located in euchromatin. Involved in the repression of testis-expressed Stellate genes by the homologous Su(Ste) repeats. Required for anteroposterior and dorsoventral axis formation during oogenesis. This chain is Probable ATP-dependent RNA helicase spindle-E (spn-E), found in Drosophila virilis (Fruit fly).